The chain runs to 150 residues: Ribonuclease H (150 aa).

Residues 1–141 (MKFIEVHTDG…VDVLARNQAI (141 aa)) form the RNase H type-1 domain. 4 residues coordinate Mg(2+): Asp9, Glu47, Asp69, and Asp133.

This sequence belongs to the RNase H family. As to quaternary structure, monomer. Requires Mg(2+) as cofactor.

The protein resides in the cytoplasm. The catalysed reaction is Endonucleolytic cleavage to 5'-phosphomonoester.. Endonuclease that specifically degrades the RNA of RNA-DNA hybrids. The sequence is that of Ribonuclease H from Xanthomonas euvesicatoria pv. vesicatoria (strain 85-10) (Xanthomonas campestris pv. vesicatoria).